The primary structure comprises 201 residues: Molybdenum cofactor guanylyltransferase (201 aa).

GTP is bound by residues 15 to 17 (LAG), Lys-28, Asp-74, and Asp-104. Position 104 (Asp-104) interacts with Mg(2+).

This sequence belongs to the MobA family. Monomer. It depends on Mg(2+) as a cofactor.

The protein resides in the cytoplasm. The enzyme catalyses Mo-molybdopterin + GTP + H(+) = Mo-molybdopterin guanine dinucleotide + diphosphate. Transfers a GMP moiety from GTP to Mo-molybdopterin (Mo-MPT) cofactor (Moco or molybdenum cofactor) to form Mo-molybdopterin guanine dinucleotide (Mo-MGD) cofactor. The polypeptide is Molybdenum cofactor guanylyltransferase (Pseudomonas syringae pv. tomato (strain ATCC BAA-871 / DC3000)).